The following is a 337-amino-acid chain: Mating-type protein MAT-2 (337 aa).

The HMG box DNA-binding region spans alanine 125–lysine 193. Residues lysine 171–alanine 219 are disordered. A compositionally biased stretch (basic residues) spans glycine 200–arginine 212.

It localises to the nucleus. The protein is Mating-type protein MAT-2 (MAT2) of Cochliobolus sativus (Common root rot and spot blotch fungus).